Here is a 116-residue protein sequence, read N- to C-terminus: Iron-sulfur cluster assembly protein CyaY (116 aa).

The protein belongs to the frataxin family.

Its function is as follows. Involved in iron-sulfur (Fe-S) cluster assembly. May act as a regulator of Fe-S biogenesis. This chain is Iron-sulfur cluster assembly protein CyaY, found in Buchnera aphidicola subsp. Acyrthosiphon pisum (strain APS) (Acyrthosiphon pisum symbiotic bacterium).